Reading from the N-terminus, the 257-residue chain is Nickel import system ATP-binding protein NikD (257 aa).

The ABC transporter domain occupies 4-245 (IDIQNLTIKN…HLHPYTERLI (242 aa)). 37 to 44 (GESGAGKS) lines the ATP pocket.

Belongs to the ABC transporter superfamily. In terms of assembly, the complex is composed of two ATP-binding proteins (NikD and NikE), two transmembrane proteins (NikB and NikC) and a solute-binding protein (NikA).

It localises to the cell membrane. It carries out the reaction Ni(2+)(out) + ATP + H2O = Ni(2+)(in) + ADP + phosphate + H(+). Functionally, part of the ABC transporter complex NikABCDE (Opp2) involved in nickel import. Probably responsible for energy coupling to the transport system. The chain is Nickel import system ATP-binding protein NikD from Staphylococcus aureus (strain MRSA252).